Here is a 177-residue protein sequence, read N- to C-terminus: ATP synthase subunit delta (177 aa).

Belongs to the ATPase delta chain family. F-type ATPases have 2 components, F(1) - the catalytic core - and F(0) - the membrane proton channel. F(1) has five subunits: alpha(3), beta(3), gamma(1), delta(1), epsilon(1). F(0) has three main subunits: a(1), b(2) and c(10-14). The alpha and beta chains form an alternating ring which encloses part of the gamma chain. F(1) is attached to F(0) by a central stalk formed by the gamma and epsilon chains, while a peripheral stalk is formed by the delta and b chains.

The protein resides in the cell inner membrane. F(1)F(0) ATP synthase produces ATP from ADP in the presence of a proton or sodium gradient. F-type ATPases consist of two structural domains, F(1) containing the extramembraneous catalytic core and F(0) containing the membrane proton channel, linked together by a central stalk and a peripheral stalk. During catalysis, ATP synthesis in the catalytic domain of F(1) is coupled via a rotary mechanism of the central stalk subunits to proton translocation. Functionally, this protein is part of the stalk that links CF(0) to CF(1). It either transmits conformational changes from CF(0) to CF(1) or is implicated in proton conduction. The sequence is that of ATP synthase subunit delta from Janthinobacterium sp. (strain Marseille) (Minibacterium massiliensis).